We begin with the raw amino-acid sequence, 381 residues long: Cytochrome b (381 aa).

The next 4 helical transmembrane spans lie at 34–54 (FGSLLGLCLIIQILTGLFLAM), 78–99 (WLIRNIHANGASLFFICVYLHI), 114–134 (WNIGVILLFLLMATAFVGYVL), and 179–199 (FFAFHFLLPFLIVGLTLIHLL). Heme b is bound by residues histidine 84 and histidine 98. Positions 183 and 197 each coordinate heme b. Histidine 202 contacts a ubiquinone. Helical transmembrane passes span 227-247 (YKDLLGFFLMIILLALLALFL), 289-309 (LGGVLALLFSIFILMLIPMLH), 321-341 (MTQFLFWTLVANAIILTWIGG), and 348-368 (FILVGQIASVTYFSLFLIIIP).

Belongs to the cytochrome b family. The cytochrome bc1 complex contains 3 respiratory subunits (MT-CYB, CYC1 and UQCRFS1), 2 core proteins (UQCRC1 and UQCRC2) and probably 6 low-molecular weight proteins. Heme b serves as cofactor.

Its subcellular location is the mitochondrion inner membrane. In terms of biological role, component of the ubiquinol-cytochrome c reductase complex (complex III or cytochrome b-c1 complex) that is part of the mitochondrial respiratory chain. The b-c1 complex mediates electron transfer from ubiquinol to cytochrome c. Contributes to the generation of a proton gradient across the mitochondrial membrane that is then used for ATP synthesis. In Squalus acanthias (Spiny dogfish), this protein is Cytochrome b (mt-cyb).